Here is a 943-residue protein sequence, read N- to C-terminus: Valine--tRNA ligase (943 aa).

Residues 45–55 carry the 'HIGH' region motif; the sequence is PNVTGTLHMGH. Residues 541-545 carry the 'KMSKS' region motif; that stretch reads KMSKS. K544 contacts ATP. Residues 875–934 are a coiled coil; that stretch reads IDVAAERIRLAKEIEKLEKQISIAQGKLANEGFVARAPAAVIDQEKQRVADFTATLEQLK.

Belongs to the class-I aminoacyl-tRNA synthetase family. ValS type 1 subfamily. Monomer.

The protein localises to the cytoplasm. It catalyses the reaction tRNA(Val) + L-valine + ATP = L-valyl-tRNA(Val) + AMP + diphosphate. In terms of biological role, catalyzes the attachment of valine to tRNA(Val). As ValRS can inadvertently accommodate and process structurally similar amino acids such as threonine, to avoid such errors, it has a 'posttransfer' editing activity that hydrolyzes mischarged Thr-tRNA(Val) in a tRNA-dependent manner. In Dechloromonas aromatica (strain RCB), this protein is Valine--tRNA ligase.